The following is a 104-amino-acid chain: ATP-dependent Clp protease adapter protein ClpS (104 aa).

The protein belongs to the ClpS family. Binds to the N-terminal domain of the chaperone ClpA.

Involved in the modulation of the specificity of the ClpAP-mediated ATP-dependent protein degradation. The chain is ATP-dependent Clp protease adapter protein ClpS from Burkholderia mallei (strain NCTC 10247).